Here is a 105-residue protein sequence, read N- to C-terminus: Small ribosomal subunit protein uS10 (105 aa).

This sequence belongs to the universal ribosomal protein uS10 family. Part of the 30S ribosomal subunit.

Its function is as follows. Involved in the binding of tRNA to the ribosomes. The protein is Small ribosomal subunit protein uS10 of Rickettsia massiliae (strain Mtu5).